We begin with the raw amino-acid sequence, 415 residues long: MSGMEKLQNASWIYQQKLEDPFQKHLNSTEEYLAFLCGPRRSHFFLPVSVVYVPIFVVGVIGNVLVCLVILQHQAMKTPTNYYLFSLAVSDLLVLLLGMPLEVYEMWRNYPFLFGPVGCYFKTALFETVCFASILSITTVSVERYVAILHPFRAKLQSTRRRALRILGIVWGFSVLFSLPNTSIHGIKFHYFPNGSLVPGSATCTVIKPMWIYNFIIQVTSFLFYLLPMTVISVLYYLMALRLKKDKSLEADEGNANIQRPCRKSVNKMLFVLVLVFAICWAPFHIDRLFFSFVEEWSESLAAVFNLVHVVSGVFFYLSSAVNPIIYNLLSRRFQAAFQNVISSFHKQWHSQHDPQLPPAQRNIFLTECHFVELTEDIGPQFPCQSSMHNSHLPAALSSEQMSRTNYQSFHFNKT.

Over 1–49 (MSGMEKLQNASWIYQQKLEDPFQKHLNSTEEYLAFLCGPRRSHFFLPVS) the chain is Extracellular. Asn9 and Asn27 each carry an N-linked (GlcNAc...) asparagine glycan. The chain crosses the membrane as a helical span at residues 50 to 70 (VVYVPIFVVGVIGNVLVCLVI). The Cytoplasmic segment spans residues 71–82 (LQHQAMKTPTNY). The helical transmembrane segment at 83 to 103 (YLFSLAVSDLLVLLLGMPLEV) threads the bilayer. The Extracellular segment spans residues 104–123 (YEMWRNYPFLFGPVGCYFKT). A disulfide bond links Cys119 and Cys204. Residues 124 to 146 (ALFETVCFASILSITTVSVERYV) traverse the membrane as a helical segment. Residues 147 to 165 (AILHPFRAKLQSTRRRALR) lie on the Cytoplasmic side of the membrane. Residues 166 to 186 (ILGIVWGFSVLFSLPNTSIHG) traverse the membrane as a helical segment. Residues 187 to 214 (IKFHYFPNGSLVPGSATCTVIKPMWIYN) are Extracellular-facing. An N-linked (GlcNAc...) asparagine glycan is attached at Asn194. Residues 215–235 (FIIQVTSFLFYLLPMTVISVL) form a helical membrane-spanning segment. Over 236 to 265 (YYLMALRLKKDKSLEADEGNANIQRPCRKS) the chain is Cytoplasmic. A helical transmembrane segment spans residues 266 to 286 (VNKMLFVLVLVFAICWAPFHI). Residues 287 to 301 (DRLFFSFVEEWSESL) lie on the Extracellular side of the membrane. The helical transmembrane segment at 302 to 322 (AAVFNLVHVVSGVFFYLSSAV) threads the bilayer. Residues 323-415 (NPIIYNLLSR…NYQSFHFNKT (93 aa)) lie on the Cytoplasmic side of the membrane.

The protein belongs to the G-protein coupled receptor 1 family. Predominantly expressed in the CNS, particularly in the medulla oblongata, pontine reticular formation, spinal cord, and thalamus. High level in testis whereas lower levels are present in a variety of peripheral tissues including the gastrointestinal tract, genitourinary tract, liver, pancreas, adrenal gland, thyroid gland, lung, trachea, spleen and thymus.

The protein localises to the cell membrane. In terms of biological role, receptor for the neuromedin-U and neuromedin-S neuropeptides. This is Neuromedin-U receptor 2 (NMUR2) from Homo sapiens (Human).